A 465-amino-acid chain; its full sequence is A-type ATP synthase subunit B (465 aa).

The protein belongs to the ATPase alpha/beta chains family. In terms of assembly, has multiple subunits with at least A(3), B(3), C, D, E, F, H, I and proteolipid K(x).

Its subcellular location is the cell membrane. In terms of biological role, component of the A-type ATP synthase that produces ATP from ADP in the presence of a proton gradient across the membrane. The B chain is a regulatory subunit. The polypeptide is A-type ATP synthase subunit B (Thermococcus onnurineus (strain NA1)).